A 318-amino-acid chain; its full sequence is DNA-directed RNA polymerase subunit alpha (318 aa).

Residues 1 to 227 are alpha N-terminal domain (alpha-NTD); sequence MTQFEIECLD…NLFSPLKTID (227 aa). The segment at 241 to 318 is alpha C-terminal domain (alpha-CTD); sequence HINQILIEEL…KEKTTKIYNK (78 aa).

It belongs to the RNA polymerase alpha chain family. In terms of assembly, in plastids the minimal PEP RNA polymerase catalytic core is composed of four subunits: alpha, beta, beta', and beta''. When a (nuclear-encoded) sigma factor is associated with the core the holoenzyme is formed, which can initiate transcription.

It localises to the plastid. The protein localises to the chloroplast. It catalyses the reaction RNA(n) + a ribonucleoside 5'-triphosphate = RNA(n+1) + diphosphate. DNA-dependent RNA polymerase catalyzes the transcription of DNA into RNA using the four ribonucleoside triphosphates as substrates. The protein is DNA-directed RNA polymerase subunit alpha of Guillardia theta (Cryptophyte).